The primary structure comprises 205 residues: CMRF35-like molecule 2 (205 aa).

The first 17 residues, 1–17, serve as a signal peptide directing secretion; it reads MWLLPALLLLCLSGCLS. An Ig-like V-type domain is found at 18–120; that stretch reads LKGPGSVTGT…VLDSWSRDPS (103 aa). Residues 18-173 are Extracellular-facing; that stretch reads LKGPGSVTGT…NSGFRLSSPH (156 aa). Residues cysteine 36 and cysteine 104 are joined by a disulfide bond. Asparagine 154 carries an N-linked (GlcNAc...) asparagine glycan. The chain crosses the membrane as a helical span at residues 174-194; sequence FLLVVLLKLPLLLSMLGAVFW. Residues 195–205 are Cytoplasmic-facing; it reads VNRPQWAPPGR.

This sequence belongs to the CD300 family. In terms of assembly, interacts with TYROBP. In terms of processing, N-glycosylated. Present on the surface of mature hematopoietic cells of the monocyte and myeloid lineages (at protein level).

It is found in the cell membrane. Probably acts as an activating receptor. The polypeptide is CMRF35-like molecule 2 (CD300E) (Homo sapiens (Human)).